Consider the following 750-residue polypeptide: uncharacterized protein (750 aa).

N-linked (GlcNAc...) asparagine glycosylation is found at Asn-61, Asn-84, Asn-115, Asn-154, Asn-176, Asn-197, Asn-207, Asn-228, Asn-241, Asn-267, Asn-293, Asn-299, Asn-312, Asn-335, Asn-351, Asn-373, Asn-389, and Asn-519. Phosphoserine occurs at positions 675 and 678. Residue Lys-697 forms a Glycyl lysine isopeptide (Lys-Gly) (interchain with G-Cter in ubiquitin) linkage. Polar residues-rich tracts occupy residues 703–726 and 736–750; these read EITA…SNRT and KDSN…HLVA. The tract at residues 703-750 is disordered; sequence EITAIDNSSSANNTDVTGSTSNRTELSHPDVTPKDSNGPVNNNAHLVA. N-linked (GlcNAc...) asparagine glycans are attached at residues Asn-709, Asn-714, and Asn-724.

Post-translationally, N-glycosylated.

It localises to the mitochondrion. This is an uncharacterized protein from Saccharomyces cerevisiae (strain ATCC 204508 / S288c) (Baker's yeast).